Here is a 598-residue protein sequence, read N- to C-terminus: Transcription factor dpl-1 (598 aa).

Disordered stretches follow at residues 1-73, 435-457, and 573-598; these read MNPT…PTGL, NRPY…VNSG, and TEQP…DYFQ. Over residues 13-22 the composition is skewed to polar residues; that stretch reads PAQSRPQVSL. Residues 55–64 show a composition bias toward gly residues; the sequence is GVGGSSGAGG.

This sequence belongs to the E2F/DP family. In terms of assembly, component of the DRM complex, at least composed of lin-9, lin-35, lin-37, lin-52, lin-53, lin-54- dpl-1 and efl-1. Interacts (via N-terminus) with efl-1. Interacts (via C-terminus) with lin-35 (via C-terminus).

It is found in the nucleus. Functionally, synthetic multivulva class B (synMuvB) protein. SynMuvB proteins are required to repress the induction of vulval development by Ras signaling and probably act by forming the multiprotein DRM complex that represses transcription. May also negatively regulate vulval development in association with other SynMuv class B proteins such as lin-15A. Can stimulate E2F-dependent transcription. Plays a role in negatively regulating the progression through the G1 phase of the cell cycle during postembryonic development, most likely by acting as a transcriptional repressor in association with the cell cycle regulatory factor efl-1 and the transcriptional repressor lin-35, but may also act as a positive regulator of cell cycle entry. Involved in the regulation of intestinal cell division during postembryonic development, most likely in complex with efl-1 and lin-35. Promotes germ cell programmed cell death, probably together with efl-1, by positively regulating the expression of the apoptosis proteins ced-3 and ced-4. In particular, positively regulates the expression of ced-4 in response to starvation. Its role in programmed cell death may be in conjunction with cell cycle regulatory factor efl-1 and the synthetic multivulva class B proteins lin-35, lin-37 and lin-52, and is independent of the ced-1, ced-8 and ced-9 pathways. The sequence is that of Transcription factor dpl-1 from Caenorhabditis elegans.